The primary structure comprises 126 residues: uncharacterized protein (126 aa).

Phosphothreonine is present on T68.

This is an uncharacterized protein from Pseudomonas aeruginosa (strain UCBPP-PA14).